A 386-amino-acid polypeptide reads, in one-letter code: 1-deoxy-D-xylulose 5-phosphate reductoisomerase (386 aa).

6 residues coordinate NADPH: Thr-7, Gly-8, Ser-9, Ile-10, Ala-33, and Asn-124. Lys-125 contributes to the 1-deoxy-D-xylulose 5-phosphate binding site. Glu-126 lines the NADPH pocket. Asp-148 provides a ligand contact to Mn(2+). Residues Ser-149, Glu-150, Ser-174, and His-197 each coordinate 1-deoxy-D-xylulose 5-phosphate. Glu-150 is a Mn(2+) binding site. Residue Gly-203 coordinates NADPH. The 1-deoxy-D-xylulose 5-phosphate site is built by Ser-210, Asn-215, Lys-216, and Glu-219. Glu-219 provides a ligand contact to Mn(2+).

This sequence belongs to the DXR family. The cofactor is Mg(2+). It depends on Mn(2+) as a cofactor.

The catalysed reaction is 2-C-methyl-D-erythritol 4-phosphate + NADP(+) = 1-deoxy-D-xylulose 5-phosphate + NADPH + H(+). It functions in the pathway isoprenoid biosynthesis; isopentenyl diphosphate biosynthesis via DXP pathway; isopentenyl diphosphate from 1-deoxy-D-xylulose 5-phosphate: step 1/6. Catalyzes the NADPH-dependent rearrangement and reduction of 1-deoxy-D-xylulose-5-phosphate (DXP) to 2-C-methyl-D-erythritol 4-phosphate (MEP). In Kitasatospora griseola (Streptomyces griseolosporeus), this protein is 1-deoxy-D-xylulose 5-phosphate reductoisomerase.